The chain runs to 315 residues: MEKFRAVLDLHVKHHSALGYGLVTLLTAGGERIFSAVAFQCPCSAAWNLPYGLVFLLVPALALFLLGYVLSARTWRLLTGCCSSARASCGSALRGSLVCTQISAAAALAPLTWVAVALLGGAFYECAATGSAAFAQRLCLGRNRSCAAELPLVPCNQAKASDVQDLLKDLKAQSQVLGWILIAVVIIILLIFTSVTRCLSPVSFLQLKFWKIYLEQEQQILKSKATEHATELAKENIKCFFEGSHPKEYNTPSMKEWQQISSLYTFNPKGQYYSMLHKYVNRKEKTHSIRSTEGDTVIPVLGFVDSSGINSTPEL.

At M1–G21 the chain is on the cytoplasmic side. A helical membrane pass occupies residues L22–V37. Residues A38–A46 lie on the Extracellular side of the membrane. Disulfide bonds link C41–C126, C43–C155, and C139–C146. The helical transmembrane segment at W47–Y68 threads the bilayer. At V69–I102 the chain is on the cytoplasmic side. Residues S103–A127 form a helical membrane-spanning segment. The Extracellular segment spans residues A128–D169. The chain crosses the membrane as a helical span at residues L170–F192. The Cytoplasmic portion of the chain corresponds to T193–L315.

The protein belongs to the CALHM family. As to quaternary structure, oligomerizes to form decameric and undecameric channels. In terms of processing, N-glycosylated. In terms of tissue distribution, placenta.

Its subcellular location is the cell membrane. The enzyme catalyses ATP(in) = ATP(out). Functionally, pore-forming subunit of an ATP-permeable channel. In response to pathogen-derived and proinflammatory stimuli, relocates from intracellular compartments to NK-dendritic cell and NK-macrophage immune synapses where it mediates ATP efflux and NK cell activation involved in antimicrobial and antitumor responses. May assemble to form gap junction channel-like structures with gating and ion conductance likely regulated by membrane lipids and voltage rather than by extracellular calcium levels. This is Calcium homeostasis modulator protein 6 from Homo sapiens (Human).